Here is a 185-residue protein sequence, read N- to C-terminus: Peptidyl-tRNA hydrolase (185 aa).

Tyrosine 14 contacts tRNA. Histidine 19 serves as the catalytic Proton acceptor. Residues tyrosine 65, asparagine 67, and asparagine 113 each contribute to the tRNA site.

This sequence belongs to the PTH family. Monomer.

The protein localises to the cytoplasm. The enzyme catalyses an N-acyl-L-alpha-aminoacyl-tRNA + H2O = an N-acyl-L-amino acid + a tRNA + H(+). Hydrolyzes ribosome-free peptidyl-tRNAs (with 1 or more amino acids incorporated), which drop off the ribosome during protein synthesis, or as a result of ribosome stalling. In terms of biological role, catalyzes the release of premature peptidyl moieties from peptidyl-tRNA molecules trapped in stalled 50S ribosomal subunits, and thus maintains levels of free tRNAs and 50S ribosomes. The polypeptide is Peptidyl-tRNA hydrolase (Rickettsia canadensis (strain McKiel)).